The primary structure comprises 226 residues: Enolase-phosphatase E1 (226 aa).

This sequence belongs to the HAD-like hydrolase superfamily. MasA/MtnC family. Monomer. Mg(2+) is required as a cofactor.

It catalyses the reaction 5-methylsulfanyl-2,3-dioxopentyl phosphate + H2O = 1,2-dihydroxy-5-(methylsulfanyl)pent-1-en-3-one + phosphate. The protein operates within amino-acid biosynthesis; L-methionine biosynthesis via salvage pathway; L-methionine from S-methyl-5-thio-alpha-D-ribose 1-phosphate: step 3/6. It participates in amino-acid biosynthesis; L-methionine biosynthesis via salvage pathway; L-methionine from S-methyl-5-thio-alpha-D-ribose 1-phosphate: step 4/6. Bifunctional enzyme that catalyzes the enolization of 2,3-diketo-5-methylthiopentyl-1-phosphate (DK-MTP-1-P) into the intermediate 2-hydroxy-3-keto-5-methylthiopentenyl-1-phosphate (HK-MTPenyl-1-P), which is then dephosphorylated to form the acireductone 1,2-dihydroxy-3-keto-5-methylthiopentene (DHK-MTPene). In Shewanella baltica (strain OS195), this protein is Enolase-phosphatase E1.